The chain runs to 276 residues: Diacetylchitobiose uptake system permease protein DasC (276 aa).

The next 6 helical transmembrane spans lie at 14-34 (TAVV…ATAF), 74-94 (LIVT…GSFA), 105-125 (GFIV…VIAI), 137-157 (SLVP…ILTL), 186-206 (VILP…FITA), and 241-261 (GATM…FVYL). Positions 70 to 261 (VSNSLIVTVC…IPILILFVYL (192 aa)) constitute an ABC transmembrane type-1 domain.

The protein belongs to the binding-protein-dependent transport system permease family. As to quaternary structure, the complex is composed of two ATP-binding proteins (MsiK), two transmembrane proteins (DasB and DasC) and a solute-binding protein (DasA).

The protein resides in the cell membrane. Functionally, part of the ABC transporter complex DasABC-MsiK involved in N,N'-diacetylchitobiose ((GlcNAc)2) uptake. Responsible for the translocation of the substrate across the membrane. This Streptomyces coelicolor (strain ATCC BAA-471 / A3(2) / M145) protein is Diacetylchitobiose uptake system permease protein DasC.